Here is a 223-residue protein sequence, read N- to C-terminus: DNA-directed RNA polymerase III subunit RPC7 (223 aa).

A disordered region spans residues 110–223 (MMPRNKCKKA…SDDNMDEATY (114 aa)). Over residues 114–125 (NKCKKAGPKPKK) the composition is skewed to basic residues. Thr-133 is subject to Phosphothreonine. Positions 140–155 (DVLKKMEELEKRGDGE) are enriched in basic and acidic residues. Position 157 is a phosphoserine (Ser-157). Residues 164–173 (KEGSKEKSKE) are compositionally biased toward basic and acidic residues. Composition is skewed to acidic residues over residues 174-198 (GDDD…EEND) and 205-223 (EDGD…EATY).

It belongs to the eukaryotic RPC7 RNA polymerase subunit family. In terms of assembly, component of the RNA polymerase III complex consisting of 17 subunits: a ten-subunit horseshoe-shaped catalytic core composed of POLR3A/RPC1, POLR3B/RPC2, POLR1C/RPAC1, POLR1D/RPAC2, POLR3K/RPC10, POLR2E/RPABC1, POLR2F/RPABC2, POLR2H/RPABC3, POLR2K/RPABC4 and POLR2L/RPABC5; a mobile stalk composed of two subunits POLR3H/RPC8 and CRCP/RPC9, protruding from the core and functioning primarily in transcription initiation; and additional subunits homologous to general transcription factors of the RNA polymerase II machinery, POLR3C/RPC3-POLR3F/RPC6-POLR3G/RPC7 heterotrimer required for transcription initiation and POLR3D/RPC4-POLR3E/RPC5 heterodimer involved in both transcription initiation and termination. Directly interacts with POLR3C/RPC62. Also found in a trimeric complex with POLR3C/RPC3 and POLR3GL. Barely detectable in differentiated tissues. Expressed in embryonic stem cells and in other dividing cells, such as some tumor cell lines.

The protein resides in the nucleus. The protein localises to the cytoplasm. DNA-dependent RNA polymerase catalyzes the transcription of DNA into RNA using the four ribonucleoside triphosphates as substrates. Specific peripheric component of RNA polymerase III (Pol III) which synthesizes small non-coding RNAs including 5S rRNA, snRNAs, tRNAs and miRNAs from at least 500 distinct genomic loci. Acts as a long tether that bridges POLR3C/RPC3-POLR3F/RPC6-POLR3G/RPC7 heterotrimer and the mobile stalk of Pol III, coordinating the dynamics of Pol III stalk and clamp modules during the transition from apo to elongation state. Pol III exists as two alternative complexes defined by the mutually exclusive incorporation of subunit POLR3G/RPC7alpha or POLR3GL/RPC7beta. POLR3G/RPC7alpha modulates Pol III transcriptome by specifically enhancing the transcription of snaR-A non-coding RNAs. At resting state, occupies the active site of apo Pol III and keeps Pol III in an autoinhibitory mode, preventing non-specific transcription. Pol III plays a key role in sensing and limiting infection by intracellular bacteria and DNA viruses. Acts as a nuclear and cytosolic DNA sensor involved in innate immune response. Can sense non-self dsDNA that serves as template for transcription into dsRNA. The non-self RNA polymerase III transcripts, such as Epstein-Barr virus-encoded RNAs (EBERs), induce type I interferon and NF-kappa-B through the RIG-I pathway. This is DNA-directed RNA polymerase III subunit RPC7 from Homo sapiens (Human).